We begin with the raw amino-acid sequence, 285 residues long: Dihydropteroate synthase (285 aa).

Residues 18-276 (PKIMGIVNLT…DVKATADALK (259 aa)) enclose the Pterin-binding domain. Residue N25 coordinates Mg(2+). Residues T66, D99, N119, D190, K229, and 264 to 266 (RVH) each bind (7,8-dihydropterin-6-yl)methyl diphosphate.

It belongs to the DHPS family. As to quaternary structure, homodimer. Requires Mg(2+) as cofactor.

It carries out the reaction (7,8-dihydropterin-6-yl)methyl diphosphate + 4-aminobenzoate = 7,8-dihydropteroate + diphosphate. It participates in cofactor biosynthesis; tetrahydrofolate biosynthesis; 7,8-dihydrofolate from 2-amino-4-hydroxy-6-hydroxymethyl-7,8-dihydropteridine diphosphate and 4-aminobenzoate: step 1/2. In terms of biological role, catalyzes the condensation of para-aminobenzoate (pABA) with 6-hydroxymethyl-7,8-dihydropterin diphosphate (DHPt-PP) to form 7,8-dihydropteroate (H2Pte), the immediate precursor of folate derivatives. The polypeptide is Dihydropteroate synthase (folP) (Neisseria meningitidis serogroup B (strain ATCC BAA-335 / MC58)).